The primary structure comprises 364 residues: tRNA 2-selenouridine synthase (364 aa).

In terms of domain architecture, Rhodanese spans 12–135; the sequence is FLNDRPMMDT…MRTFLLDTTE (124 aa). The active-site S-selanylcysteine intermediate is cysteine 95.

The protein belongs to the SelU family. Monomer.

The enzyme catalyses 5-methylaminomethyl-2-thiouridine(34) in tRNA + selenophosphate + (2E)-geranyl diphosphate + H2O + H(+) = 5-methylaminomethyl-2-selenouridine(34) in tRNA + (2E)-thiogeraniol + phosphate + diphosphate. It catalyses the reaction 5-methylaminomethyl-2-thiouridine(34) in tRNA + (2E)-geranyl diphosphate = 5-methylaminomethyl-S-(2E)-geranyl-thiouridine(34) in tRNA + diphosphate. The catalysed reaction is 5-methylaminomethyl-S-(2E)-geranyl-thiouridine(34) in tRNA + selenophosphate + H(+) = 5-methylaminomethyl-2-(Se-phospho)selenouridine(34) in tRNA + (2E)-thiogeraniol. It carries out the reaction 5-methylaminomethyl-2-(Se-phospho)selenouridine(34) in tRNA + H2O = 5-methylaminomethyl-2-selenouridine(34) in tRNA + phosphate. Functionally, involved in the post-transcriptional modification of the uridine at the wobble position (U34) of tRNA(Lys), tRNA(Glu) and tRNA(Gln). Catalyzes the conversion of 2-thiouridine (S2U-RNA) to 2-selenouridine (Se2U-RNA). Acts in a two-step process involving geranylation of 2-thiouridine (S2U) to S-geranyl-2-thiouridine (geS2U) and subsequent selenation of the latter derivative to 2-selenouridine (Se2U) in the tRNA chain. In Pseudomonas fluorescens (strain ATCC BAA-477 / NRRL B-23932 / Pf-5), this protein is tRNA 2-selenouridine synthase.